The following is a 119-amino-acid chain: Ribonuclease P protein component (119 aa).

This sequence belongs to the RnpA family. As to quaternary structure, consists of a catalytic RNA component (M1 or rnpB) and a protein subunit.

It catalyses the reaction Endonucleolytic cleavage of RNA, removing 5'-extranucleotides from tRNA precursor.. RNaseP catalyzes the removal of the 5'-leader sequence from pre-tRNA to produce the mature 5'-terminus. It can also cleave other RNA substrates such as 4.5S RNA. The protein component plays an auxiliary but essential role in vivo by binding to the 5'-leader sequence and broadening the substrate specificity of the ribozyme. This Streptococcus mutans serotype c (strain ATCC 700610 / UA159) protein is Ribonuclease P protein component.